Reading from the N-terminus, the 108-residue chain is Histone H4 (108 aa).

A disordered region spans residues 1–36 (MSSAQSRGGKTGGKVGGKVGAKRHKKTQKEHINGIT). A compositionally biased stretch (gly residues) spans 9 to 19 (GKTGGKVGGKV).

This sequence belongs to the histone H4 family. As to quaternary structure, the nucleosome is a histone octamer containing two molecules each of H2A, H2B, H3 and H4 assembled in one H3-H4 heterotetramer and two H2A-H2B heterodimers. The octamer wraps approximately 147 bp of DNA.

The protein resides in the nucleus. It localises to the chromosome. Functionally, core component of nucleosome. Nucleosomes wrap and compact DNA into chromatin, limiting DNA accessibility to the cellular machineries which require DNA as a template. Histones thereby play a central role in transcription regulation, DNA repair, DNA replication and chromosomal stability. DNA accessibility is regulated via a complex set of post-translational modifications of histones, also called histone code, and nucleosome remodeling. This chain is Histone H4 (H4a), found in Dictyostelium discoideum (Social amoeba).